Consider the following 458-residue polypeptide: Peptidyl-prolyl cis-trans isomerase FKBP4 (458 aa).

Met-1 is subject to N-acetylmethionine; in peptidyl-prolyl cis-trans isomerase FKBP4; alternate. The tract at residues 1-24 (MTAEEMKAAENGAQSAPLPLEGVD) is disordered. Thr-2 bears the N-acetylthreonine; in peptidyl-prolyl cis-trans isomerase FKBP4, N-terminally processed; partial mark. Residues 50–138 (GDRVFVHYTG…VFEVELFEFK (89 aa)) form the PPIase FKBP-type 1 domain. Thr-143 is modified (phosphothreonine; by CK2). A PPIase FKBP-type 2 domain is found at 167-253 (GAMVEVALEG…RYEVRLKSFE (87 aa)). Tyr-220 carries the post-translational modification Phosphotyrosine. The tract at residues 267–400 (LEQSNIVKER…TQLAVCQQRT (134 aa)) is interaction with tubulin. TPR repeat units lie at residues 270–303 (SNIVKERGTAYFKEGKYKQALLQYKKIVSWLEYE), 319–352 (LASHLNLAMCHLKLQAFSAAIESCNKALELDSNN), and 353–386 (EKGLFRRGEAHLAVNDFDLARADFQKVLQLYPSN). An N6-acetyllysine modification is found at Lys-282. Arg-373 carries the omega-N-methylarginine modification. The segment at 428–458 (EVAAGDHPTDAEMKGERNNVAENQSRVETEA) is disordered. Residues 434-458 (HPTDAEMKGERNNVAENQSRVETEA) show a composition bias toward basic and acidic residues. Thr-436 is subject to Phosphothreonine. Residue Lys-441 forms a Glycyl lysine isopeptide (Lys-Gly) (interchain with G-Cter in SUMO1) linkage. The residue at position 452 (Ser-452) is a Phosphoserine.

Homodimer. Interacts with GLMN. Associates with HSP90AA1 and HSPA1A/HSPA1B in steroid hormone receptor complexes. Also interacts with peroxisomal phytanoyl-CoA alpha-hydroxylase (PHYH). Interacts with NR3C1 and dynein. Interacts with HSF1 in the HSP90 complex. Associates with tubulin. Interacts with MAPT/TAU. Interacts (via TPR domain) with S100A1, S100A2 and S100A6; the interaction is Ca(2+) dependent. Interaction with S100A1 and S100A2 (but not with S100A6) leads to inhibition of FKBP4-HSP90 interaction. Interacts with dynein; contributes to NR3C1 transport to the nucleus. In terms of processing, phosphorylation by CK2 results in loss of HSP90 binding activity.

It is found in the cytoplasm. The protein resides in the cytosol. Its subcellular location is the mitochondrion. The protein localises to the nucleus. It localises to the cytoskeleton. It catalyses the reaction [protein]-peptidylproline (omega=180) = [protein]-peptidylproline (omega=0). Inhibited by FK506. Its function is as follows. Immunophilin protein with PPIase and co-chaperone activities. Component of steroid receptors heterocomplexes through interaction with heat-shock protein 90 (HSP90). May play a role in the intracellular trafficking of heterooligomeric forms of steroid hormone receptors between cytoplasm and nuclear compartments. The isomerase activity controls neuronal growth cones via regulation of TRPC1 channel opening. Also acts as a regulator of microtubule dynamics by inhibiting MAPT/TAU ability to promote microtubule assembly. May have a protective role against oxidative stress in mitochondria. In Mus musculus (Mouse), this protein is Peptidyl-prolyl cis-trans isomerase FKBP4 (Fkbp4).